We begin with the raw amino-acid sequence, 225 residues long: Ribonuclease T (225 aa).

A disordered region spans residues 1-21 (MSEDHFDDEHEGHGGGGGSRH). In terms of domain architecture, Exonuclease spans 33–207 (VVVDVETGGF…YDTEKTAELF (175 aa)). The Mg(2+) site is built by Asp36, Glu38, His194, and Asp199. The Proton donor/acceptor role is filled by His194.

It belongs to the RNase T family. As to quaternary structure, homodimer. Mg(2+) serves as cofactor.

Trims short 3' overhangs of a variety of RNA species, leaving a one or two nucleotide 3' overhang. Responsible for the end-turnover of tRNA: specifically removes the terminal AMP residue from uncharged tRNA (tRNA-C-C-A). Also appears to be involved in tRNA biosynthesis. The chain is Ribonuclease T from Pseudomonas syringae pv. syringae (strain B728a).